Reading from the N-terminus, the 207-residue chain is Alpha-1-acid glycoprotein 1 (207 aa).

The N-terminal stretch at 1 to 18 (MALHTVLIILSLLPMLEA) is a signal peptide. Gln-19 carries the pyrrolidone carboxylic acid modification. Asn-25, Asn-34, Asn-76, Asn-94, and Asn-104 each carry an N-linked (GlcNAc...) asparagine glycan. Residues Cys-91 and Cys-184 are joined by a disulfide bond.

It belongs to the calycin superfamily. Lipocalin family.

It is found in the secreted. In terms of biological role, functions as a transport protein in the blood stream. Binds various ligands in the interior of its beta-barrel domain. Appears to function in modulating the activity of the immune system during the acute-phase reaction. The chain is Alpha-1-acid glycoprotein 1 (Orm1) from Mus musculus (Mouse).